A 492-amino-acid chain; its full sequence is Probable glycine dehydrogenase (decarboxylating) subunit 2 (492 aa).

K274 is subject to N6-(pyridoxal phosphate)lysine.

Belongs to the GcvP family. C-terminal subunit subfamily. The glycine cleavage system is composed of four proteins: P, T, L and H. In this organism, the P 'protein' is a heterodimer of two subunits. The cofactor is pyridoxal 5'-phosphate.

The catalysed reaction is N(6)-[(R)-lipoyl]-L-lysyl-[glycine-cleavage complex H protein] + glycine + H(+) = N(6)-[(R)-S(8)-aminomethyldihydrolipoyl]-L-lysyl-[glycine-cleavage complex H protein] + CO2. In terms of biological role, the glycine cleavage system catalyzes the degradation of glycine. The P protein binds the alpha-amino group of glycine through its pyridoxal phosphate cofactor; CO(2) is released and the remaining methylamine moiety is then transferred to the lipoamide cofactor of the H protein. The protein is Probable glycine dehydrogenase (decarboxylating) subunit 2 of Exiguobacterium sibiricum (strain DSM 17290 / CCUG 55495 / CIP 109462 / JCM 13490 / 255-15).